The chain runs to 215 residues: Methylthioribulose-1-phosphate dehydratase (215 aa).

Zn(2+)-binding residues include His103 and His105.

It belongs to the aldolase class II family. MtnB subfamily. Requires Zn(2+) as cofactor.

The catalysed reaction is 5-(methylsulfanyl)-D-ribulose 1-phosphate = 5-methylsulfanyl-2,3-dioxopentyl phosphate + H2O. Its pathway is amino-acid biosynthesis; L-methionine biosynthesis via salvage pathway; L-methionine from S-methyl-5-thio-alpha-D-ribose 1-phosphate: step 2/6. Functionally, catalyzes the dehydration of methylthioribulose-1-phosphate (MTRu-1-P) into 2,3-diketo-5-methylthiopentyl-1-phosphate (DK-MTP-1-P). The sequence is that of Methylthioribulose-1-phosphate dehydratase from Sulfurihydrogenibium sp. (strain YO3AOP1).